A 278-amino-acid chain; its full sequence is UPF0276 protein Ssed_2857 (278 aa).

Belongs to the UPF0276 family.

This chain is UPF0276 protein Ssed_2857, found in Shewanella sediminis (strain HAW-EB3).